The primary structure comprises 272 residues: Glutamate racemase (272 aa).

Residues 10 to 11 (DS) and 42 to 43 (YG) each bind substrate. The active-site Proton donor/acceptor is Cys73. 74 to 75 (NT) is a binding site for substrate. Catalysis depends on Cys183, which acts as the Proton donor/acceptor. 184 to 185 (TH) contacts substrate.

This sequence belongs to the aspartate/glutamate racemases family.

The enzyme catalyses L-glutamate = D-glutamate. It participates in cell wall biogenesis; peptidoglycan biosynthesis. In terms of biological role, provides the (R)-glutamate required for cell wall biosynthesis. This is Glutamate racemase from Leifsonia xyli subsp. xyli (strain CTCB07).